Consider the following 244-residue polypeptide: Probable transcriptional regulatory protein MMOB1910 (244 aa).

Belongs to the TACO1 family.

Its subcellular location is the cytoplasm. This chain is Probable transcriptional regulatory protein MMOB1910, found in Mycoplasma mobile (strain ATCC 43663 / 163K / NCTC 11711) (Mesomycoplasma mobile).